Here is a 307-residue protein sequence, read N- to C-terminus: uncharacterized protein (307 aa).

One can recognise an ABC transporter domain in the interval 5–233 (VQTNGLTKTY…NTEYIELVTP (229 aa)). Residue 37 to 44 (GPNGAGKT) coordinates ATP.

Belongs to the ABC transporter superfamily.

This is an uncharacterized protein from Bacillus subtilis (strain 168).